Consider the following 299-residue polypeptide: tRNA-cytidine(32) 2-sulfurtransferase (299 aa).

Positions 56-61 match the PP-loop motif motif; sequence SGGKDS. [4Fe-4S] cluster is bound by residues cysteine 131, cysteine 134, and cysteine 222.

The protein belongs to the TtcA family. In terms of assembly, homodimer. Mg(2+) is required as a cofactor. The cofactor is [4Fe-4S] cluster.

The protein localises to the cytoplasm. The catalysed reaction is cytidine(32) in tRNA + S-sulfanyl-L-cysteinyl-[cysteine desulfurase] + AH2 + ATP = 2-thiocytidine(32) in tRNA + L-cysteinyl-[cysteine desulfurase] + A + AMP + diphosphate + H(+). Its pathway is tRNA modification. In terms of biological role, catalyzes the ATP-dependent 2-thiolation of cytidine in position 32 of tRNA, to form 2-thiocytidine (s(2)C32). The sulfur atoms are provided by the cysteine/cysteine desulfurase (IscS) system. The protein is tRNA-cytidine(32) 2-sulfurtransferase of Xylella fastidiosa (strain M23).